An 836-amino-acid polypeptide reads, in one-letter code: Serine/threonine-protein kinase ATG1 (836 aa).

The Protein kinase domain maps to 21 to 321 (YTVEKEIGKG…FNEFFNNEVV (301 aa)). ATP is bound by residues 27 to 35 (IGKGSFAIV) and Lys50. Asp168 functions as the Proton acceptor in the catalytic mechanism. Disordered regions lie at residues 387–425 (EHYR…GQTR), 458–489 (NNGP…GGRR), and 619–642 (CAID…TPGA). The segment covering 395–404 (LQGQQQQQQQ) has biased composition (low complexity). Composition is skewed to polar residues over residues 411 to 425 (RGST…GQTR), 459 to 468 (NGPTTNNQGA), and 630 to 640 (GNPSSNQTLTP). Positions 571 to 836 (ITPFVESLSA…RLKALKSKMS (266 aa)) are interaction with ATG13.

This sequence belongs to the protein kinase superfamily. Ser/Thr protein kinase family. APG1/unc-51/ULK1 subfamily. In terms of assembly, homodimer. Dimerization requires the presence of ATG13. Forms a ternary complex with ATG13 and ATG17.

It is found in the cytoplasm. The protein resides in the preautophagosomal structure membrane. It catalyses the reaction L-seryl-[protein] + ATP = O-phospho-L-seryl-[protein] + ADP + H(+). It carries out the reaction L-threonyl-[protein] + ATP = O-phospho-L-threonyl-[protein] + ADP + H(+). Its function is as follows. Serine/threonine protein kinase involved in the cytoplasm to vacuole transport (Cvt) and found to be essential in autophagy, where it is required for the formation of autophagosomes. Involved in the clearance of protein aggregates which cannot be efficiently cleared by the proteasome. Required for selective autophagic degradation of the nucleus (nucleophagy) as well as for mitophagy which contributes to regulate mitochondrial quantity and quality by eliminating the mitochondria to a basal level to fulfill cellular energy requirements and preventing excess ROS production. Also involved in endoplasmic reticulum-specific autophagic process, in selective removal of ER-associated degradation (ERAD) substrates. Plays a key role in ATG9 and ATG23 cycling through the pre-autophagosomal structure and is necessary to promote ATG18 binding to ATG9 through phosphorylation of ATG9. Catalyzes phosphorylation of ATG4, decreasing the interaction between ATG4 and ATG8 and impairing deconjugation of PE-conjugated forms of ATG8. The sequence is that of Serine/threonine-protein kinase ATG1 from Kluyveromyces marxianus (strain DMKU3-1042 / BCC 29191 / NBRC 104275) (Yeast).